We begin with the raw amino-acid sequence, 435 residues long: Tol-Pal system protein TolB (435 aa).

The first 20 residues, 1 to 20 (MRKIIAGVFIFVFLISNLYA), serve as a signal peptide directing secretion.

This sequence belongs to the TolB family. The Tol-Pal system is composed of five core proteins: the inner membrane proteins TolA, TolQ and TolR, the periplasmic protein TolB and the outer membrane protein Pal. They form a network linking the inner and outer membranes and the peptidoglycan layer.

Its subcellular location is the periplasm. In terms of biological role, part of the Tol-Pal system, which plays a role in outer membrane invagination during cell division and is important for maintaining outer membrane integrity. The chain is Tol-Pal system protein TolB from Francisella tularensis subsp. holarctica (strain LVS).